Consider the following 568-residue polypeptide: MFS-type efflux transporter phmH (568 aa).

The span at 1-11 (MVSGTDTTEVG) shows a compositional bias: polar residues. The tract at residues 1–39 (MVSGTDTTEVGATTKAPPSEGTEGILDDHSSNSQPQAEK) is disordered. The next 7 helical transmembrane spans lie at 45-65 (YPLS…VSAL), 101-121 (YVMI…GGSS), 134-154 (GIGA…LVPM), 161-181 (IGLL…VGGI), 199-219 (IFYI…LFLH), 237-257 (VIGN…LTYG), and 268-288 (IAAP…WEMS). N-linked (GlcNAc...) asparagine glycosylation occurs at N303. 6 consecutive transmembrane segments (helical) span residues 307 to 327 (AAAF…NFFY), 344 to 364 (VYTL…GAIV), 372 to 392 (TVHL…SILD), 399 to 419 (EWVI…STTL), 437 to 457 (TWSF…AAIF), and 515 to 535 (IGIV…EIHL). N563 carries N-linked (GlcNAc...) asparagine glycosylation.

The protein belongs to the major facilitator superfamily.

Its subcellular location is the cell membrane. In terms of biological role, MFS-type efflux transporter; part of the gene cluster that mediates the biosynthesis of thethe mycotoxins phomacins, leucine-derived cytochalasans with potent actin polymerization-inhibitory activities and monocot-specific antigerminative activities. PhmH might be involved in the excretion of phomacins. This Phaeosphaeria nodorum (strain SN15 / ATCC MYA-4574 / FGSC 10173) (Glume blotch fungus) protein is MFS-type efflux transporter phmH.